The primary structure comprises 445 residues: Phosphoglucosamine mutase (445 aa).

The active-site Phosphoserine intermediate is the serine 102. Residues serine 102, aspartate 241, aspartate 243, and aspartate 245 each contribute to the Mg(2+) site. Phosphoserine is present on serine 102.

It belongs to the phosphohexose mutase family. Mg(2+) is required as a cofactor. Post-translationally, activated by phosphorylation.

The catalysed reaction is alpha-D-glucosamine 1-phosphate = D-glucosamine 6-phosphate. Its function is as follows. Catalyzes the conversion of glucosamine-6-phosphate to glucosamine-1-phosphate. In Shewanella pealeana (strain ATCC 700345 / ANG-SQ1), this protein is Phosphoglucosamine mutase.